The primary structure comprises 105 residues: Replication initiation control protein YabA (105 aa).

4 residues coordinate Zn(2+): His79, Cys81, Cys95, and Cys98.

This sequence belongs to the YabA family. As to quaternary structure, homotetramer. Interacts with both DnaA and DnaN, acting as a bridge between these two proteins. Zn(2+) serves as cofactor.

Its subcellular location is the cytoplasm. It is found in the nucleoid. Involved in control of chromosome replication initiation. Inhibits the cooperative binding of DnaA to the oriC region, thus negatively regulating initiation of chromosome replication. Inhibits the ability of DnaA-ATP to form a helix on DNA; does not disassemble preformed DnaA-DNA helices. Decreases the residence time of DnaA on the chromosome at its binding sites (oriC, replication forks and promoter-binding sites). Tethers DnaA to the replication machinery via the DNA polymerase beta sliding clamp subunit (dnaN). Associates with oriC and other DnaA targets on the chromosome in a DnaA-dependent manner. The chain is Replication initiation control protein YabA from Streptococcus suis (strain 98HAH33).